We begin with the raw amino-acid sequence, 292 residues long: Coatomer subunit epsilon (292 aa).

This sequence belongs to the COPE family. In terms of assembly, oligomeric complex that consists of at least the alpha, beta, beta', gamma, delta, epsilon and zeta subunits.

It localises to the cytoplasm. Its subcellular location is the golgi apparatus membrane. The protein localises to the cytoplasmic vesicle. It is found in the COPI-coated vesicle membrane. Functionally, the coatomer is a cytosolic protein complex that binds to dilysine motifs and reversibly associates with Golgi non-clathrin-coated vesicles, which further mediate biosynthetic protein transport from the ER, via the Golgi up to the trans Golgi network. The coatomer complex is required for budding from Golgi membranes, and is essential for the retrograde Golgi-to-ER transport of dilysine-tagged proteins. This chain is Coatomer subunit epsilon (cope-1), found in Caenorhabditis elegans.